A 688-amino-acid chain; its full sequence is Glycine--tRNA ligase beta subunit (688 aa).

The protein belongs to the class-II aminoacyl-tRNA synthetase family. As to quaternary structure, tetramer of two alpha and two beta subunits.

The protein resides in the cytoplasm. It carries out the reaction tRNA(Gly) + glycine + ATP = glycyl-tRNA(Gly) + AMP + diphosphate. The sequence is that of Glycine--tRNA ligase beta subunit from Lactobacillus delbrueckii subsp. bulgaricus (strain ATCC BAA-365 / Lb-18).